The chain runs to 80 residues: Peroxidase (80 aa).

Positions 56–80 are disordered; it reads DANEAEANSDLPGFNSSRSELEAAF. P67 lines the substrate pocket. The N-linked (GlcNAc...) asparagine glycan is linked to N70.

Belongs to the peroxidase family. Classical plant (class III) peroxidase subfamily. Ca(2+) is required as a cofactor. It depends on heme b as a cofactor.

It catalyses the reaction 2 a phenolic donor + H2O2 = 2 a phenolic radical donor + 2 H2O. In terms of biological role, removal of H(2)O(2), oxidation of toxic reductants, biosynthesis and degradation of lignin, suberization, auxin catabolism, response to environmental stresses such as wounding, pathogen attack and oxidative stress. These functions might be dependent on each isozyme/isoform in each plant tissue. The polypeptide is Peroxidase (Triticum aestivum (Wheat)).